A 455-amino-acid chain; its full sequence is Ectonucleoside triphosphate diphosphohydrolase 6 (455 aa).

Residues 1–12 are Cytoplasmic-facing; that stretch reads MRKIPNHGTLRM. The helical; Signal-anchor for type II membrane protein transmembrane segment at 13-32 threads the bilayer; it reads TKVAYPLGLCVGLFIYVAYI. Residues 33–455 lie on the Lumenal side of the membrane; the sequence is KWHRASAAQA…SLKRQKVPAL (423 aa). Asn192 carries N-linked (GlcNAc...) asparagine glycosylation. Glu196 serves as the catalytic Proton acceptor. Residue Asn256 is glycosylated (N-linked (GlcNAc...) asparagine). Intrachain disulfides connect Cys297/Cys327 and Cys387/Cys401.

It belongs to the GDA1/CD39 NTPase family. Ca(2+) serves as cofactor. Requires Mg(2+) as cofactor. Post-translationally, might be cleaved at the N-terminus, retained in an intracellular membrane compartment and in addition be released into the extracellular medium. N-glycosylated. As to expression, expressed in heart and brain.

It is found in the golgi apparatus membrane. Its subcellular location is the secreted. The protein localises to the cell membrane. It catalyses the reaction a ribonucleoside 5'-diphosphate + H2O = a ribonucleoside 5'-phosphate + phosphate + H(+). The enzyme catalyses IDP + H2O = IMP + phosphate + H(+). It carries out the reaction GDP + H2O = GMP + phosphate + H(+). The catalysed reaction is UDP + H2O = UMP + phosphate + H(+). Its function is as follows. Catalyzes the hydrolysis of nucleoside triphosphates and diphosphates in a calcium- or magnesium-dependent manner. Has a strong preference for nucleoside diphosphates, preferentially hydrolyzes GDP, IDP, and UDP, with slower hydrolysis of CDP, ITP, GTP, CTP, ADP, and UTP and virtually no hydrolysis of ATP. The membrane bound form might support glycosylation reactions in the Golgi apparatus and, when released from cells, might catalyze the hydrolysis of extracellular nucleotides. This Rattus norvegicus (Rat) protein is Ectonucleoside triphosphate diphosphohydrolase 6 (Entpd6).